The chain runs to 4194 residues: Hybrid PKS-NRPS synthetase pydA (4194 aa).

The Ketosynthase family 3 (KS3) domain occupies 14–450 (REPIAVVGSG…GTNAHAIVEN (437 aa)). Active-site for beta-ketoacyl synthase activity residues include cysteine 187, histidine 326, and histidine 370. The Malonyl-CoA:ACP transacylase (MAT) domain maps to 565 to 887 (VFTGQGAQWA…QRGKDDVQAF (323 aa)). Residues 953 to 1088 (HPLLGTRTTD…GRVIVITGEA (136 aa)) form an N-terminal hotdog fold region. The PKS/mFAS DH domain maps to 953–1257 (HPLLGTRTTD…VVSFSEPTAE (305 aa)). Histidine 985 (proton acceptor; for dehydratase activity) is an active-site residue. A C-terminal hotdog fold region spans residues 1103–1257 (LVDIPEDRFY…VVSFSEPTAE (155 aa)). The Proton donor; for dehydratase activity role is filled by aspartate 1163. Residues 1302-1596 (YMRQLASLFP…FSGVDSTTHE (295 aa)) are methyltransferase (cMeT) domain. The Ketoreductase (KR) domain maps to 2141–2314 (TYVFFGLTSD…AGSILHIGAV (174 aa)). The region spanning 2421–2505 (TTAEEALEIV…ELVEFAVENM (85 aa)) is the Carrier 1 domain. O-(pantetheine 4'-phosphoryl)serine is present on serine 2465. The tract at residues 2512-2583 (NMSDSLNAVP…ERDSSTASLE (72 aa)) is disordered. Positions 2526-2547 (APVIPASPPSGSVSSAPSSDPP) are enriched in low complexity. Residues 2550 to 2565 (TAETSQHLSESSSKTS) show a composition bias toward polar residues. Basic and acidic residues predominate over residues 2566 to 2577 (QPDEKQSEERDS). The tract at residues 2591 to 3023 (EKVLPVSPGQ…QILKDVSLFT (433 aa)) is condensation. The adenylation stretch occupies residues 3056–3467 (ANPPQEIALR…RIEGDTQIKL (412 aa)). Residues 3580 to 3660 (TQLTEAESEL…AMAAVIQDLS (81 aa)) enclose the Carrier 2 domain. Serine 3620 is modified (O-(pantetheine 4'-phosphoryl)serine). Residues 3701-3920 (ITGATGFLGK…VDLISVERAA (220 aa)) enclose the Thioester reductase (TE) domain. Disordered stretches follow at residues 4031–4110 (RRDK…DEQI) and 4163–4194 (KGEYPCGSDGREEAEEAEWQCDEGHGDGEPDD). The span at 4057 to 4072 (RGRDVSPRHPALDHPD) shows a compositional bias: basic and acidic residues. A compositionally biased stretch (acidic residues) spans 4174–4183 (EEAEEAEWQC). A compositionally biased stretch (basic and acidic residues) spans 4184 to 4194 (DEGHGDGEPDD).

The protein in the C-terminal section; belongs to the NRP synthetase family. Pantetheine 4'-phosphate is required as a cofactor.

It functions in the pathway mycotoxin biosynthesis. Functionally, hybrid PKS-NRPS synthetase; part of the gene cluster that mediates the biosynthesis of pyrrocidines, fungal natural products containing a macrocyclic para-cyclophane connected to a decahydrofluorene ring system that show potent antibiotic activities toward Gram-negative bacteria. Within the pathway, the PKS-NRPS pydA, with the help of the trans-enoyl reductase pydC, synthesize the polyketide-tyrosyl acyl thioester product which can be reductively off-loaded by the terminal reductase (R) domain in pydA. The PKS module of pydA acts in combination with the trans-acting enoyl reductase pydC to produce a methylated polyketide attached to the ACP domain. In parallel, the adenylation (A) domain of the NRPS module activated L-tyrosine, which is then transferred to the ACP domain. The condensation (C) domain subsequently link this group to the polyketide chain, forming an enzyme-bound amide. The alpha/beta hydrolase pydG is then required to catalyze the subsequent Knoevenagel condensation that affords the 3-pyrrolin-2-one ring, whereas the four proteins pydB, pydE, pydX and pydZ then function synergistically to form the cyclophane. PydB and the membrane-bound pydX and pydZ are lipid-binding proteins that can sequester and mold the pdyG product into the inverse S-shape. Binding of the medium chain reductase pydE to the complex would trigger the cascade oxidative cyclization. PydY is involved in the Diels-Alder cycloaddition that forms the decahydrofluorene core. Additional non-enzymatic hydroxylation yields pyrrocidine A2 which can be further reduced into pyrrocidine B by an endogenous reductase. The sequence is that of Hybrid PKS-NRPS synthetase pydA from Acremonium sp.